The sequence spans 126 residues: Protein Wnt-7(II) (126 aa).

Ser-1 is lipidated: O-palmitoleoyl serine; by PORCN. A disulfide bridge connects residues Cys-92 and Cys-107. N-linked (GlcNAc...) asparagine glycosylation is present at Asn-93.

Belongs to the Wnt family. Post-translationally, palmitoleoylation is required for efficient binding to frizzled receptors. Depalmitoleoylation leads to Wnt signaling pathway inhibition.

The protein resides in the secreted. Its subcellular location is the extracellular space. It is found in the extracellular matrix. Functionally, ligand for members of the frizzled family of seven transmembrane receptors. Probable developmental protein. May be a signaling molecule which affects the development of discrete regions of tissues. Is likely to signal over only few cell diameters. This is Protein Wnt-7(II) (WNT-7(II)) from Eptatretus stoutii (Pacific hagfish).